The primary structure comprises 119 residues: Large ribosomal subunit protein bL12 (119 aa).

This sequence belongs to the bacterial ribosomal protein bL12 family. Homodimer. Part of the ribosomal stalk of the 50S ribosomal subunit. Forms a multimeric L10(L12)X complex, where L10 forms an elongated spine to which 2 to 4 L12 dimers bind in a sequential fashion. Binds GTP-bound translation factors.

In terms of biological role, forms part of the ribosomal stalk which helps the ribosome interact with GTP-bound translation factors. Is thus essential for accurate translation. In Lysinibacillus sphaericus (strain C3-41), this protein is Large ribosomal subunit protein bL12.